Consider the following 490-residue polypeptide: Mitochondrial-processing peptidase subunit beta (490 aa).

Residues 1–46 constitute a mitochondrion transit peptide; sequence MAAAAVARAVLFSAARRRLCGFTERLLIGGAAGRSLYFGGNRLRST. Zn(2+) is bound at residue histidine 102. Residue glutamate 105 is the Proton acceptor of the active site. Zn(2+)-binding residues include histidine 106 and glutamate 182.

The protein belongs to the peptidase M16 family. As to quaternary structure, heterodimer of PMPCA (alpha) and PMPCB (beta) subunits, forming the mitochondrial processing protease (MPP) in which PMPCA is involved in substrate recognition and binding and PMPCB is the catalytic subunit. The cofactor is Zn(2+).

The protein resides in the mitochondrion matrix. It catalyses the reaction Release of N-terminal transit peptides from precursor proteins imported into the mitochondrion, typically with Arg in position P2.. Its activity is regulated as follows. Binding to PMPCA is required for catalytic activity. Its function is as follows. Catalytic subunit of the essential mitochondrial processing protease (MPP), which cleaves the mitochondrial sequence off newly imported precursors proteins. Preferentially, cleaves after an arginine at position P2. Required for PINK1 turnover by coupling PINK1 mitochondrial import and cleavage, which results in subsequent PINK1 proteolysis. The sequence is that of Mitochondrial-processing peptidase subunit beta (PMPCB) from Bos taurus (Bovine).